Consider the following 245-residue polypeptide: Cytochrome P450 CYP82H23 (245 aa).

It belongs to the cytochrome P450 family. It depends on heme as a cofactor.

In terms of biological role, probable heme-thiolate monooxygenase. The polypeptide is Cytochrome P450 CYP82H23 (Panax ginseng (Korean ginseng)).